The following is a 645-amino-acid chain: Cysteine-rich receptor-like protein kinase 19 (645 aa).

The first 20 residues, 1–20 (MSSLISFIFLFLFSSITASA), serve as a signal peptide directing secretion. Topologically, residues 21–262 (QNTFYLYHNC…PRPGKGGNSS (242 aa)) are extracellular. Gnk2-homologous domains are found at residues 24 to 129 (FYLY…NRNI) and 135 to 239 (TDGG…NYAF). Asn-29, Asn-39, Asn-57, Asn-101, Asn-185, Asn-241, and Asn-260 each carry an N-linked (GlcNAc...) asparagine glycan. A helical membrane pass occupies residues 263 to 283 (VIIIAVVVPITVLFLLLVAVF). Over 284-645 (SVRAKNKRTL…EASITRVTPR (362 aa)) the chain is Cytoplasmic. The region spanning 326–603 (FLPINKLGQG…IVQMLTTSLI (278 aa)) is the Protein kinase domain. ATP contacts are provided by residues 332-340 (LGQGGFGEV) and Lys-354. A Phosphotyrosine modification is found at Tyr-399. Asp-451 functions as the Proton acceptor in the catalytic mechanism. Thr-491 is subject to Phosphothreonine. Tyr-499 is modified (phosphotyrosine). Positions 616-645 (RSKQEQAGPSIDSSTHCSVDEASITRVTPR) are disordered. Over residues 620 to 632 (EQAGPSIDSSTHC) the composition is skewed to polar residues.

The protein belongs to the protein kinase superfamily. Ser/Thr protein kinase family. CRK subfamily. Interacts with MWL1.

The protein localises to the membrane. It carries out the reaction L-seryl-[protein] + ATP = O-phospho-L-seryl-[protein] + ADP + H(+). It catalyses the reaction L-threonyl-[protein] + ATP = O-phospho-L-threonyl-[protein] + ADP + H(+). The chain is Cysteine-rich receptor-like protein kinase 19 (CRK19) from Arabidopsis thaliana (Mouse-ear cress).